The following is a 310-amino-acid chain: Methionyl-tRNA formyltransferase (310 aa).

Ser109 to Pro112 serves as a coordination point for (6S)-5,6,7,8-tetrahydrofolate.

The protein belongs to the Fmt family.

The catalysed reaction is L-methionyl-tRNA(fMet) + (6R)-10-formyltetrahydrofolate = N-formyl-L-methionyl-tRNA(fMet) + (6S)-5,6,7,8-tetrahydrofolate + H(+). Attaches a formyl group to the free amino group of methionyl-tRNA(fMet). The formyl group appears to play a dual role in the initiator identity of N-formylmethionyl-tRNA by promoting its recognition by IF2 and preventing the misappropriation of this tRNA by the elongation apparatus. The chain is Methionyl-tRNA formyltransferase from Alkaliphilus oremlandii (strain OhILAs) (Clostridium oremlandii (strain OhILAs)).